The following is a 219-amino-acid chain: Probable GTP-binding protein EngB (219 aa).

The EngB-type G domain maps to 31–205 (VGVEIAFAGR…LSILNEWCHP (175 aa)). GTP is bound by residues 39–46 (GRSNAGKS), 66–70 (GRTQL), 84–87 (DLPG), 151–154 (TKSD), and 184–186 (FSS). Positions 46 and 68 each coordinate Mg(2+).

This sequence belongs to the TRAFAC class TrmE-Era-EngA-EngB-Septin-like GTPase superfamily. EngB GTPase family. The cofactor is Mg(2+).

In terms of biological role, necessary for normal cell division and for the maintenance of normal septation. This is Probable GTP-binding protein EngB from Shewanella denitrificans (strain OS217 / ATCC BAA-1090 / DSM 15013).